The primary structure comprises 244 residues: Probable transcriptional regulatory protein XF_1906 (244 aa).

It belongs to the TACO1 family.

Its subcellular location is the cytoplasm. This chain is Probable transcriptional regulatory protein XF_1906, found in Xylella fastidiosa (strain 9a5c).